The primary structure comprises 88 residues: Large ribosomal subunit protein bL27 (88 aa).

The disordered stretch occupies residues 1-21 (MAHKKAGGSSRNGRDSDGRRL).

The protein belongs to the bacterial ribosomal protein bL27 family.

This is Large ribosomal subunit protein bL27 from Methylobacterium nodulans (strain LMG 21967 / CNCM I-2342 / ORS 2060).